An 884-amino-acid chain; its full sequence is Alanine--tRNA ligase (884 aa).

Positions 562, 566, 674, and 678 each coordinate Zn(2+).

Belongs to the class-II aminoacyl-tRNA synthetase family. Zn(2+) is required as a cofactor.

The protein resides in the cytoplasm. The catalysed reaction is tRNA(Ala) + L-alanine + ATP = L-alanyl-tRNA(Ala) + AMP + diphosphate. Catalyzes the attachment of alanine to tRNA(Ala) in a two-step reaction: alanine is first activated by ATP to form Ala-AMP and then transferred to the acceptor end of tRNA(Ala). Also edits incorrectly charged Ser-tRNA(Ala) and Gly-tRNA(Ala) via its editing domain. The sequence is that of Alanine--tRNA ligase from Rhizobium etli (strain ATCC 51251 / DSM 11541 / JCM 21823 / NBRC 15573 / CFN 42).